Reading from the N-terminus, the 1627-residue chain is Type III effector DspE (1627 aa).

Composition is skewed to polar residues over residues 22–44 and 59–74; these read AKTS…SLIQ and GNGS…STTL. Disordered regions lie at residues 22 to 102 and 436 to 464; these read AKTS…GPIQ and QTQA…TPGW. 3 short sequence motifs (wxxxE) span residues 464–468, 514–520, and 660–667; these read WNLSD, WEASSVE, and WQNAANHD.

The protein belongs to the AvrE family.

It is found in the secreted. The protein localises to the host cell. Its function is as follows. Major virulence factor that may function as a water- and solute-permeable channel dedicated to creating osmotic/water potential perturbation and a water- and nutrient-rich apoplast in which bacteria multiply within the infected plant tissues. Required for plant cell death in N.benthamiana leaves and leaf cell death in S.tuberosum. Essential for pathogenicity. Does not suppress callose formation. The chain is Type III effector DspE from Pectobacterium carotovorum (Erwinia carotovora).